The following is a 34-amino-acid chain: Photosystem II reaction center protein M (34 aa).

The chain crosses the membrane as a helical span at residues 5–25; it reads ILAFIATALFILVPTAFLLII.

The protein belongs to the PsbM family. PSII is composed of 1 copy each of membrane proteins PsbA, PsbB, PsbC, PsbD, PsbE, PsbF, PsbH, PsbI, PsbJ, PsbK, PsbL, PsbM, PsbT, PsbX, PsbY, PsbZ, Psb30/Ycf12, at least 3 peripheral proteins of the oxygen-evolving complex and a large number of cofactors. It forms dimeric complexes.

It is found in the plastid. The protein resides in the chloroplast thylakoid membrane. One of the components of the core complex of photosystem II (PSII). PSII is a light-driven water:plastoquinone oxidoreductase that uses light energy to abstract electrons from H(2)O, generating O(2) and a proton gradient subsequently used for ATP formation. It consists of a core antenna complex that captures photons, and an electron transfer chain that converts photonic excitation into a charge separation. This subunit is found at the monomer-monomer interface. In Coffea arabica (Arabian coffee), this protein is Photosystem II reaction center protein M.